Here is a 354-residue protein sequence, read N- to C-terminus: Methylthioribose-1-phosphate isomerase (354 aa).

Substrate-binding positions include 58–60, R101, and Q204; that span reads RGA. The active-site Proton donor is D245. Residue 255-256 participates in substrate binding; the sequence is NK.

This sequence belongs to the eIF-2B alpha/beta/delta subunits family. MtnA subfamily.

It carries out the reaction 5-(methylsulfanyl)-alpha-D-ribose 1-phosphate = 5-(methylsulfanyl)-D-ribulose 1-phosphate. It participates in amino-acid biosynthesis; L-methionine biosynthesis via salvage pathway; L-methionine from S-methyl-5-thio-alpha-D-ribose 1-phosphate: step 1/6. Catalyzes the interconversion of methylthioribose-1-phosphate (MTR-1-P) into methylthioribulose-1-phosphate (MTRu-1-P). The chain is Methylthioribose-1-phosphate isomerase from Xanthomonas oryzae pv. oryzae (strain MAFF 311018).